We begin with the raw amino-acid sequence, 635 residues long: Threonine--tRNA ligase (635 aa).

Residues 1–61 (MINISFPDGS…DNDCKFRILT (61 aa)) enclose the TGS domain. Residues 242–533 (DHRKLGRELD…LIEEYAGRFP (292 aa)) form a catalytic region. Zn(2+) is bound by residues Cys333, His384, and His510.

The protein belongs to the class-II aminoacyl-tRNA synthetase family. In terms of assembly, homodimer. The cofactor is Zn(2+).

Its subcellular location is the cytoplasm. It catalyses the reaction tRNA(Thr) + L-threonine + ATP = L-threonyl-tRNA(Thr) + AMP + diphosphate + H(+). In terms of biological role, catalyzes the attachment of threonine to tRNA(Thr) in a two-step reaction: L-threonine is first activated by ATP to form Thr-AMP and then transferred to the acceptor end of tRNA(Thr). Also edits incorrectly charged L-seryl-tRNA(Thr). This is Threonine--tRNA ligase from Rickettsia rickettsii (strain Sheila Smith).